We begin with the raw amino-acid sequence, 1128 residues long: Scavenger receptor cysteine-rich domain superfamily protein (1128 aa).

The first 24 residues, 1 to 24 (MTSLRRGNICWVAVCAALLTLTRG), serve as a signal peptide directing secretion. The Extracellular segment spans residues 25–1051 (IDVIAKPSRT…VGAQAGPAGG (1027 aa)). SRCR domains lie at 40–140 (VQLV…VVCN), 143–245 (VRLA…VICT), 248–348 (IRLV…VICT), 351–450 (VRLV…AKCQ), 453–553 (VQLV…VVCR), 555–654 (IRLA…VVCR), 657–757 (LRLA…VVCT), 759–866 (LRLT…VLCK), and 868–968 (IRLV…VQCK). 21 disulfides stabilise this stretch: Cys-65–Cys-129, Cys-78–Cys-139, Cys-109–Cys-119, Cys-168–Cys-234, Cys-181–Cys-244, Cys-212–Cys-222, Cys-273–Cys-337, Cys-286–Cys-347, Cys-316–Cys-326, Cys-376–Cys-439, Cys-389–Cys-449, Cys-419–Cys-429, Cys-478–Cys-542, Cys-491–Cys-552, Cys-522–Cys-532, Cys-583–Cys-644, Cys-596–Cys-653, Cys-624–Cys-634, Cys-682–Cys-746, Cys-695–Cys-756, and Cys-726–Cys-736. The N-linked (GlcNAc...) asparagine glycan is linked to Asn-87. N-linked (GlcNAc...) asparagine glycans are attached at residues Asn-190 and Asn-194. Residue Asn-229 is glycosylated (N-linked (GlcNAc...) asparagine). N-linked (GlcNAc...) asparagine glycosylation is present at Asn-422. N-linked (GlcNAc...) asparagine glycosylation is found at Asn-601 and Asn-612. N-linked (GlcNAc...) asparagine glycans are attached at residues Asn-765, Asn-808, Asn-834, and Asn-936. 6 disulfide bridges follow: Cys-803–Cys-865, Cys-833–Cys-843, Cys-906–Cys-967, Cys-937–Cys-947, Cys-971–Cys-1013, and Cys-999–Cys-1026. In terms of domain architecture, Sushi spans 969–1028 (AGCDWPGPIRHGSFSPNRSSYDPLTTIDVKCDAGYELMGSKTLQCVTGCDWSRPTPECQR). Residue Asn-985 is glycosylated (N-linked (GlcNAc...) asparagine). N-linked (GlcNAc...) asparagine glycosylation occurs at Asn-1031. A helical transmembrane segment spans residues 1052–1072 (VMLIIGIILGAVVMMLIACVA). At 1073–1128 (LYLKGRNKNIGRGNPATTSAIWKPKKEFDELKEPVLSFSAMTAGGAGPEDGMGEDI) the chain is on the cytoplasmic side.

From the mid-gastrula stage, expressed only in mesenchyme cells that are migrating toward the body wall. At the brachiolaria stage, expressed in presumptive coelomocytes of the coelomic pouch. Also expressed in adult coelomocytes (at protein level).

The protein localises to the cytoplasmic vesicle membrane. Functionally, involved in aggregate formation and phagocytosis by larval mesenchyme cells and adult coelomocytes. Binds to bacteria and may act as an opsonin in the innate immune system. The polypeptide is Scavenger receptor cysteine-rich domain superfamily protein (Patiria pectinifera (Starfish)).